The sequence spans 438 residues: UDP-N-acetylmuramoylalanine--D-glutamate ligase (438 aa).

112-118 (GSNGKST) contributes to the ATP binding site.

Belongs to the MurCDEF family.

Its subcellular location is the cytoplasm. It carries out the reaction UDP-N-acetyl-alpha-D-muramoyl-L-alanine + D-glutamate + ATP = UDP-N-acetyl-alpha-D-muramoyl-L-alanyl-D-glutamate + ADP + phosphate + H(+). It participates in cell wall biogenesis; peptidoglycan biosynthesis. In terms of biological role, cell wall formation. Catalyzes the addition of glutamate to the nucleotide precursor UDP-N-acetylmuramoyl-L-alanine (UMA). This chain is UDP-N-acetylmuramoylalanine--D-glutamate ligase, found in Yersinia pestis bv. Antiqua (strain Antiqua).